Here is a 225-residue protein sequence, read N- to C-terminus: Protein-L-isoaspartate O-methyltransferase (225 aa).

S75 is an active-site residue.

It belongs to the methyltransferase superfamily. L-isoaspartyl/D-aspartyl protein methyltransferase family.

The protein resides in the cytoplasm. It carries out the reaction [protein]-L-isoaspartate + S-adenosyl-L-methionine = [protein]-L-isoaspartate alpha-methyl ester + S-adenosyl-L-homocysteine. Catalyzes the methyl esterification of L-isoaspartyl residues in peptides and proteins that result from spontaneous decomposition of normal L-aspartyl and L-asparaginyl residues. It plays a role in the repair and/or degradation of damaged proteins. This Xanthomonas campestris pv. campestris (strain 8004) protein is Protein-L-isoaspartate O-methyltransferase.